Reading from the N-terminus, the 671-residue chain is DNA ligase (671 aa).

NAD(+) is bound by residues 32–36 (DAEYD), 81–82 (SL), and Glu-113. The active-site N6-AMP-lysine intermediate is Lys-115. NAD(+) is bound by residues Arg-136, Glu-173, Lys-290, and Lys-314. Zn(2+)-binding residues include Cys-408, Cys-411, Cys-426, and Cys-432. Residues 593–671 (EIDSPFAGKT…EAEMLRLLGS (79 aa)) enclose the BRCT domain.

The protein belongs to the NAD-dependent DNA ligase family. LigA subfamily. Requires Mg(2+) as cofactor. Mn(2+) is required as a cofactor.

It catalyses the reaction NAD(+) + (deoxyribonucleotide)n-3'-hydroxyl + 5'-phospho-(deoxyribonucleotide)m = (deoxyribonucleotide)n+m + AMP + beta-nicotinamide D-nucleotide.. DNA ligase that catalyzes the formation of phosphodiester linkages between 5'-phosphoryl and 3'-hydroxyl groups in double-stranded DNA using NAD as a coenzyme and as the energy source for the reaction. It is essential for DNA replication and repair of damaged DNA. This Escherichia coli O157:H7 protein is DNA ligase.